We begin with the raw amino-acid sequence, 314 residues long: Olfactory receptor 2Z1 (314 aa).

The Extracellular segment spans residues methionine 1–glutamine 25. An N-linked (GlcNAc...) asparagine glycan is attached at asparagine 5. The helical transmembrane segment at leucine 26–isoleucine 49 threads the bilayer. At arginine 50–threonine 57 the chain is on the cytoplasmic side. Residues proline 58 to proline 79 traverse the membrane as a helical segment. Over lysine 80–glutamine 100 the chain is Extracellular. Residues isoleucine 101 to tyrosine 120 form a helical membrane-spanning segment. The Cytoplasmic segment spans residues aspartate 121–glutamine 139. Residues valine 140–isoleucine 158 form a helical membrane-spanning segment. The Extracellular portion of the chain corresponds to glutamine 159–tyrosine 195. Residues glutamate 196–glycine 219 traverse the membrane as a helical segment. The Cytoplasmic portion of the chain corresponds to histidine 220–lysine 236. A helical transmembrane segment spans residues alanine 237 to tyrosine 259. Residues methionine 260 to asparagine 272 lie on the Extracellular side of the membrane. The chain crosses the membrane as a helical span at residues valine 273–leucine 292. Topologically, residues arginine 293–cysteine 314 are cytoplasmic.

The protein belongs to the G-protein coupled receptor 1 family.

The protein resides in the cell membrane. Odorant receptor. The protein is Olfactory receptor 2Z1 (OR2Z1) of Homo sapiens (Human).